Consider the following 269-residue polypeptide: MNASRIAAAGASTLTRRIIPCLDVTAGRVVKGVNFVNLTDAGDPVEIARRYNEQGADELTFLDITATSDGHDLILPIIEQVASQVFIPLTVGGGVRQVSDVQRLLNAGADKISINSAAVANPELVRAAADYHGSQCIVVAIDARRSSAEGEPARWEVFTHGGRKATGLDAVAWARRMAAYGAGEILLTSMDRDGTKSGFDLELTRAVSDAVPVPVIASGGVGNLQHLADGVTTGRASAVLAASIFHFGQHTVRECKQYMAERGIAVRLT.

Catalysis depends on residues Asp-23 and Asp-142.

The protein belongs to the HisA/HisF family. In terms of assembly, heterodimer of HisH and HisF.

It localises to the cytoplasm. The enzyme catalyses 5-[(5-phospho-1-deoxy-D-ribulos-1-ylimino)methylamino]-1-(5-phospho-beta-D-ribosyl)imidazole-4-carboxamide + L-glutamine = D-erythro-1-(imidazol-4-yl)glycerol 3-phosphate + 5-amino-1-(5-phospho-beta-D-ribosyl)imidazole-4-carboxamide + L-glutamate + H(+). It participates in amino-acid biosynthesis; L-histidine biosynthesis; L-histidine from 5-phospho-alpha-D-ribose 1-diphosphate: step 5/9. IGPS catalyzes the conversion of PRFAR and glutamine to IGP, AICAR and glutamate. The HisF subunit catalyzes the cyclization activity that produces IGP and AICAR from PRFAR using the ammonia provided by the HisH subunit. The chain is Imidazole glycerol phosphate synthase subunit HisF from Bordetella parapertussis (strain 12822 / ATCC BAA-587 / NCTC 13253).